The primary structure comprises 330 residues: Poly(3-hydroxyalkanoate) polymerase subunit PhaE (330 aa).

The stretch at 298-328 (RSEVDEIHQTIYQLRKEVKSLKKRLGETEAN) forms a coiled coil.

It belongs to the PHA/PHB synthase family. Type III PhaE subfamily. Forms a heterodimer with PhaC, which may multimerize in the presence of 3-hydroxybutyryl-CoA. Both subunits are required for PHB synthesis in E.coli and in PHA-negative A.eutrophus.

The protein localises to the cytoplasm. The protein operates within biopolymer metabolism; poly-(R)-3-hydroxybutanoate biosynthesis. Its function is as follows. When expressed in E.coli with Synechocystis PhaC and C.necator PhaA and PhaB, confers the ability to synthesize up to 13% (w/w) poly(3-hydroxybutyrate) (PHB) depending on the carbon source; all 4 genes are necessary for PHB production. Cell-free in vitro coexpression with PhaE gives a heterodimer able to polymerize 3-hydroxybutyrate-CoA. This subunit has no catalytic activity but enhances the activity of PhaC, the catalytic subunit. The sequence is that of Poly(3-hydroxyalkanoate) polymerase subunit PhaE from Synechocystis sp. (strain ATCC 27184 / PCC 6803 / Kazusa).